Consider the following 876-residue polypeptide: DNA polymerase I (876 aa).

One can recognise a 5'-3' exonuclease domain in the interval 1-310; the sequence is MKNKLVLIDG…FAIADSVTDE (310 aa). The tract at residues 289–876 is subtilisin large fragment; the sequence is TDEGEKPLAG…HYGPTWYDAK (588 aa). The tract at residues 469–876 is polymerase; sequence EQDRLLTELE…HYGPTWYDAK (408 aa).

It belongs to the DNA polymerase type-A family. Single-chain monomer with multiple functions.

It carries out the reaction DNA(n) + a 2'-deoxyribonucleoside 5'-triphosphate = DNA(n+1) + diphosphate. Functionally, in addition to polymerase activity, the recombinant enzyme has strand displacement and 5'-3' exonuclease activity, but lacks proofreading 3'-5' exonuclease activity. This is DNA polymerase I (polA) from Geobacillus stearothermophilus (Bacillus stearothermophilus).